We begin with the raw amino-acid sequence, 57 residues long: UPF0391 membrane protein Atu4467 (57 aa).

2 consecutive transmembrane segments (helical) span residues 4 to 24 (WALI…TGIS) and 33 to 53 (ILFF…LMAG).

The protein belongs to the UPF0391 family.

It is found in the cell membrane. The polypeptide is UPF0391 membrane protein Atu4467 (Agrobacterium fabrum (strain C58 / ATCC 33970) (Agrobacterium tumefaciens (strain C58))).